The sequence spans 312 residues: Malate dehydrogenase (312 aa).

NAD(+) contacts are provided by residues 7 to 13 and Asp34; that span reads GAAGGIG. Substrate-binding residues include Arg81 and Arg87. Residues Asn94 and 117–119 contribute to the NAD(+) site; that span reads ITN. Residues Asn119 and Arg153 each coordinate substrate. His177 (proton acceptor) is an active-site residue. Met227 contributes to the NAD(+) binding site.

This sequence belongs to the LDH/MDH superfamily. MDH type 1 family. As to quaternary structure, homodimer.

The enzyme catalyses (S)-malate + NAD(+) = oxaloacetate + NADH + H(+). Catalyzes the reversible oxidation of malate to oxaloacetate. The chain is Malate dehydrogenase from Shigella dysenteriae serotype 1 (strain Sd197).